Here is a 514-residue protein sequence, read N- to C-terminus: Bifunctional purine biosynthesis protein PurH (514 aa).

The region spanning 1-146 (MPPLALLSTS…KNFAHVTVLC (146 aa)) is the MGS-like domain.

This sequence belongs to the PurH family.

The catalysed reaction is (6R)-10-formyltetrahydrofolate + 5-amino-1-(5-phospho-beta-D-ribosyl)imidazole-4-carboxamide = 5-formamido-1-(5-phospho-D-ribosyl)imidazole-4-carboxamide + (6S)-5,6,7,8-tetrahydrofolate. It catalyses the reaction IMP + H2O = 5-formamido-1-(5-phospho-D-ribosyl)imidazole-4-carboxamide. The protein operates within purine metabolism; IMP biosynthesis via de novo pathway; 5-formamido-1-(5-phospho-D-ribosyl)imidazole-4-carboxamide from 5-amino-1-(5-phospho-D-ribosyl)imidazole-4-carboxamide (10-formyl THF route): step 1/1. Its pathway is purine metabolism; IMP biosynthesis via de novo pathway; IMP from 5-formamido-1-(5-phospho-D-ribosyl)imidazole-4-carboxamide: step 1/1. The polypeptide is Bifunctional purine biosynthesis protein PurH (Cyanothece sp. (strain PCC 7425 / ATCC 29141)).